We begin with the raw amino-acid sequence, 371 residues long: RT1 class I histocompatibility antigen, AA alpha chain (371 aa).

An N-terminal signal peptide occupies residues 1–24; it reads MEAMAPRTLLLLLAAALAPTQTRA. Residues 25 to 114 form an alpha-1 region; it reads GSHSLRYFYT…LRGYYNQSEG (90 aa). Over 25–311 the chain is Extracellular; sequence GSHSLRYFYT…PSTDSNMETT (287 aa). Residue N110 is glycosylated (N-linked (GlcNAc...) asparagine). The segment at 115-206 is alpha-2; sequence GSHTIQEMYG…ELGKETLLRS (92 aa). Residues 207–298 are alpha-3; sequence DPPEAHVTLH…GLPKPLSQRW (92 aa). Residues 209–295 enclose the Ig-like C1-type domain; that stretch reads PEAHVTLHPR…EHEGLPKPLS (87 aa). The N-linked (GlcNAc...) asparagine glycan is linked to N280. The connecting peptide stretch occupies residues 299-311; it reads EPSPSTDSNMETT. The helical transmembrane segment at 312–336 threads the bilayer; that stretch reads VIYVILGAVAMIGAVAIIGAMVAVV. Over 337 to 371 the chain is Cytoplasmic; that stretch reads RRRKRNTGGKGGDYAPAPGRDSSQSSDVSLPDCKA. The tract at residues 342-371 is disordered; sequence NTGGKGGDYAPAPGRDSSQSSDVSLPDCKA. Residues S362 and S365 each carry the phosphoserine modification.

It belongs to the MHC class I family. In terms of assembly, heterodimer of an alpha chain and a beta chain (beta-2-microglobulin).

The protein localises to the membrane. Its function is as follows. Involved in the presentation of foreign antigens to the immune system. This Rattus norvegicus (Rat) protein is RT1 class I histocompatibility antigen, AA alpha chain.